A 234-amino-acid polypeptide reads, in one-letter code: Large ribosomal subunit protein uL1 (234 aa).

This sequence belongs to the universal ribosomal protein uL1 family. As to quaternary structure, part of the 50S ribosomal subunit.

Binds directly to 23S rRNA. The L1 stalk is quite mobile in the ribosome, and is involved in E site tRNA release. Its function is as follows. Protein L1 is also a translational repressor protein, it controls the translation of the L11 operon by binding to its mRNA. In Escherichia coli O127:H6 (strain E2348/69 / EPEC), this protein is Large ribosomal subunit protein uL1.